We begin with the raw amino-acid sequence, 349 residues long: Ribosomal RNA small subunit methyltransferase H (349 aa).

Residues 34–36 (GGH), aspartate 54, phenylalanine 81, aspartate 102, and glutamine 109 each bind S-adenosyl-L-methionine. The interval 328-349 (SRTGSVQHGQAKHKGVVQRGGS) is disordered.

Belongs to the methyltransferase superfamily. RsmH family.

It is found in the cytoplasm. The enzyme catalyses cytidine(1402) in 16S rRNA + S-adenosyl-L-methionine = N(4)-methylcytidine(1402) in 16S rRNA + S-adenosyl-L-homocysteine + H(+). Its function is as follows. Specifically methylates the N4 position of cytidine in position 1402 (C1402) of 16S rRNA. This Dehalococcoides mccartyi (strain ATCC BAA-2100 / JCM 16839 / KCTC 5957 / BAV1) protein is Ribosomal RNA small subunit methyltransferase H.